A 421-amino-acid chain; its full sequence is MDCTKDYCVKDISLAPSGEKKIDWVSRFMPVLQHIRKDFEERKPFKGVRIAATLHLEMKTAFLLLTLKAAGAEVSAAASNPLSTQDDVVAALAKAGVKVYAIRGEDREQYYEFMHKALDVKPNIIIDDGADMVSTVLKERQELIPEIWGASEETTTGVIRLRAMEKDGVLKFPIIAVNDSYTKYLFDNRYGTGQSTWDGIIRTTNLLVAGKNVVVVGYGWCGRGIAMRARGLGATVIVVEVDPIRALEARMDGFLVMDMMEAAKVGDIFITATGDINCIRKEHFELMKDGAILANAGHFDVEISKPDLEALAVEISEPRPNITEYKMADGRRLYLLAEGRLVNLAAADGHPAEIMDMSFALQAKAAEYIKENRGRLEPKVYVLPREIDEMVARIKLASMGIKIEELTEEQKKYLESWEHGT.

The substrate site is built by Asp128 and Glu153. 154–156 (TTT) contacts NAD(+). The substrate site is built by Lys183 and Asp187. Residues Asn188, 217-222 (GYGWCG), Glu240, 296-298 (AGH), and Asn343 contribute to the NAD(+) site.

The protein belongs to the adenosylhomocysteinase family. NAD(+) is required as a cofactor.

Its subcellular location is the cytoplasm. The catalysed reaction is S-adenosyl-L-homocysteine + H2O = L-homocysteine + adenosine. It functions in the pathway amino-acid biosynthesis; L-homocysteine biosynthesis; L-homocysteine from S-adenosyl-L-homocysteine: step 1/1. May play a key role in the regulation of the intracellular concentration of adenosylhomocysteine. The polypeptide is Adenosylhomocysteinase (Thermococcus kodakarensis (strain ATCC BAA-918 / JCM 12380 / KOD1) (Pyrococcus kodakaraensis (strain KOD1))).